Reading from the N-terminus, the 424-residue chain is Serine--tRNA ligase (424 aa).

An L-serine-binding site is contributed by 229-231 (TAE). Residues 259 to 261 (RKE) and Val-275 contribute to the ATP site. Position 282 (Glu-282) interacts with L-serine. 349–352 (EVTS) lines the ATP pocket. Thr-383 contributes to the L-serine binding site.

Belongs to the class-II aminoacyl-tRNA synthetase family. Type-1 seryl-tRNA synthetase subfamily. Homodimer. The tRNA molecule binds across the dimer.

It localises to the cytoplasm. The catalysed reaction is tRNA(Ser) + L-serine + ATP = L-seryl-tRNA(Ser) + AMP + diphosphate + H(+). It catalyses the reaction tRNA(Sec) + L-serine + ATP = L-seryl-tRNA(Sec) + AMP + diphosphate + H(+). Its pathway is aminoacyl-tRNA biosynthesis; selenocysteinyl-tRNA(Sec) biosynthesis; L-seryl-tRNA(Sec) from L-serine and tRNA(Sec): step 1/1. Its function is as follows. Catalyzes the attachment of serine to tRNA(Ser). Is also able to aminoacylate tRNA(Sec) with serine, to form the misacylated tRNA L-seryl-tRNA(Sec), which will be further converted into selenocysteinyl-tRNA(Sec). The polypeptide is Serine--tRNA ligase (Borrelia recurrentis (strain A1)).